The primary structure comprises 349 residues: Anthranilate phosphoribosyltransferase (349 aa).

Residues glycine 82, 85–86 (GD), 92–95 (NVST), 110–118 (KHGNRAVSG), and serine 122 contribute to the 5-phospho-alpha-D-ribose 1-diphosphate site. Glycine 82 is an anthranilate binding site. A Mg(2+)-binding site is contributed by serine 94. Anthranilate is bound at residue asparagine 113. Arginine 168 contributes to the anthranilate binding site. Mg(2+)-binding residues include aspartate 227 and glutamate 228.

It belongs to the anthranilate phosphoribosyltransferase family. Homodimer. Requires Mg(2+) as cofactor.

The catalysed reaction is N-(5-phospho-beta-D-ribosyl)anthranilate + diphosphate = 5-phospho-alpha-D-ribose 1-diphosphate + anthranilate. It functions in the pathway amino-acid biosynthesis; L-tryptophan biosynthesis; L-tryptophan from chorismate: step 2/5. In terms of biological role, catalyzes the transfer of the phosphoribosyl group of 5-phosphorylribose-1-pyrophosphate (PRPP) to anthranilate to yield N-(5'-phosphoribosyl)-anthranilate (PRA). The polypeptide is Anthranilate phosphoribosyltransferase (Pseudomonas entomophila (strain L48)).